We begin with the raw amino-acid sequence, 225 residues long: 2-C-methyl-D-erythritol 4-phosphate cytidylyltransferase (225 aa).

Belongs to the IspD/TarI cytidylyltransferase family. IspD subfamily.

It carries out the reaction 2-C-methyl-D-erythritol 4-phosphate + CTP + H(+) = 4-CDP-2-C-methyl-D-erythritol + diphosphate. The protein operates within isoprenoid biosynthesis; isopentenyl diphosphate biosynthesis via DXP pathway; isopentenyl diphosphate from 1-deoxy-D-xylulose 5-phosphate: step 2/6. Catalyzes the formation of 4-diphosphocytidyl-2-C-methyl-D-erythritol from CTP and 2-C-methyl-D-erythritol 4-phosphate (MEP). The chain is 2-C-methyl-D-erythritol 4-phosphate cytidylyltransferase from Prochlorococcus marinus (strain MIT 9313).